The chain runs to 186 residues: uncharacterized protein (186 aa).

The segment at 156–186 (DTKELERTTQPPEHQKHHQEPREKRGMNKRD) is disordered. Basic and acidic residues predominate over residues 173–186 (HQEPREKRGMNKRD).

This is an uncharacterized protein from Bacillus subtilis (strain 168).